The following is a 1286-amino-acid chain: 5-oxoprolinase (1286 aa).

2 positions are modified to phosphoserine: serine 930 and serine 1077.

It belongs to the oxoprolinase family. Homodimer.

The protein resides in the cytoplasm. It carries out the reaction 5-oxo-L-proline + ATP + 2 H2O = L-glutamate + ADP + phosphate + H(+). Functionally, catalyzes the cleavage of 5-oxo-L-proline to form L-glutamate coupled to the hydrolysis of ATP to ADP and inorganic phosphate. The chain is 5-oxoprolinase (OXP1) from Saccharomyces cerevisiae (strain ATCC 204508 / S288c) (Baker's yeast).